The primary structure comprises 158 residues: Transcription elongation factor GreA (158 aa).

A coiled-coil region spans residues 10–75; it reads TKEGKEKLEQ…QMLENMIRNA (66 aa).

The protein belongs to the GreA/GreB family.

Necessary for efficient RNA polymerase transcription elongation past template-encoded arresting sites. The arresting sites in DNA have the property of trapping a certain fraction of elongating RNA polymerases that pass through, resulting in locked ternary complexes. Cleavage of the nascent transcript by cleavage factors such as GreA or GreB allows the resumption of elongation from the new 3'terminus. GreA releases sequences of 2 to 3 nucleotides. The sequence is that of Transcription elongation factor GreA from Geobacillus kaustophilus (strain HTA426).